The following is a 449-amino-acid chain: Exopolygalacturonase X-2 (449 aa).

A signal peptide spans 1 to 24 (MGFKRTIGLLLGILLALDQVSVLA). Residues asparagine 136, asparagine 172, and asparagine 208 are each glycosylated (N-linked (GlcNAc...) asparagine). A PbH1 1 repeat occupies 240–261 (SDNVVIQNSVINHDDDCVSFKP). Aspartate 254 (proton donor) is an active-site residue. A disulfide bridge connects residues cysteine 256 and cysteine 273. 2 N-linked (GlcNAc...) asparagine glycosylation sites follow: asparagine 262 and asparagine 274. PbH1 repeat units lie at residues 263–283 (STNI…SVGS) and 294–315 (VSDL…RLKV). Histidine 277 is an active-site residue. N-linked (GlcNAc...) asparagine glycans are attached at residues asparagine 301, asparagine 306, asparagine 340, and asparagine 365. A disulfide bridge links cysteine 403 with cysteine 409. Residues asparagine 416 and asparagine 421 are each glycosylated (N-linked (GlcNAc...) asparagine).

This sequence belongs to the glycosyl hydrolase 28 family.

Its subcellular location is the secreted. The enzyme catalyses [(1-&gt;4)-alpha-D-galacturonosyl](n) + H2O = alpha-D-galacturonate + [(1-&gt;4)-alpha-D-galacturonosyl](n-1). In terms of biological role, specific in hydrolyzing the terminal glycosidic bond of polygalacturonic acid and oligogalacturonates. This Emericella nidulans (strain FGSC A4 / ATCC 38163 / CBS 112.46 / NRRL 194 / M139) (Aspergillus nidulans) protein is Exopolygalacturonase X-2 (pgaX-2).